The sequence spans 121 residues: Large ribosomal subunit protein bL19 (121 aa).

The protein belongs to the bacterial ribosomal protein bL19 family.

In terms of biological role, this protein is located at the 30S-50S ribosomal subunit interface and may play a role in the structure and function of the aminoacyl-tRNA binding site. This is Large ribosomal subunit protein bL19 from Porphyromonas gingivalis (strain ATCC BAA-308 / W83).